The following is a 161-amino-acid chain: MADVEYRCFVGGLRWATDDQSLQNAFSKYGDVIDSKIITDRETGRSRGFGFVTFASDEAMRQAIEAMNGQDLDGRNITVNEAQSRRSDGGGGFGGGGGGYGGQRREGGGGGYGGGGGGYGGGRSGGGGGYGSRDGGGGGYGGGGGGYGGSRGGSGGGNWRE.

The 79-residue stretch at 6-84 (YRCFVGGLRW…RNITVNEAQS (79 aa)) folds into the RRM domain. Residues 72 to 161 (LDGRNITVNE…GGSGGGNWRE (90 aa)) are disordered. Ser-87 bears the Phosphoserine; by PKA mark. Residues 89–161 (GGGGFGGGGG…GGSGGGNWRE (73 aa)) are compositionally biased toward gly residues.

Binds single-stranded DNA and homoribopolymers of guanine, uracil and adenine, but not cytosine. Also binds RNA, with a preference for RNA containing a high proportion of adenine within an open loop structure. Possibly has a role in RNA transcription or processing during stress. The polypeptide is Glycine-rich RNA-binding protein blt801 (Hordeum vulgare (Barley)).